The chain runs to 151 residues: Regulatory protein RecX (151 aa).

Belongs to the RecX family.

It localises to the cytoplasm. Modulates RecA activity. In Herminiimonas arsenicoxydans, this protein is Regulatory protein RecX.